Here is a 462-residue protein sequence, read N- to C-terminus: Argininosuccinate lyase (462 aa).

The protein belongs to the lyase 1 family. Argininosuccinate lyase subfamily.

Its subcellular location is the cytoplasm. It carries out the reaction 2-(N(omega)-L-arginino)succinate = fumarate + L-arginine. Its pathway is amino-acid biosynthesis; L-arginine biosynthesis; L-arginine from L-ornithine and carbamoyl phosphate: step 3/3. In Lachnoclostridium phytofermentans (strain ATCC 700394 / DSM 18823 / ISDg) (Clostridium phytofermentans), this protein is Argininosuccinate lyase.